The primary structure comprises 146 residues: Small ribosomal subunit protein uS5 (146 aa).

One can recognise an S5 DRBM domain in the interval 8-71 (FKEVVVNIGR…DDAFKNIIKV (64 aa)).

Belongs to the universal ribosomal protein uS5 family. In terms of assembly, part of the 30S ribosomal subunit. Contacts proteins S4 and S8.

Its function is as follows. With S4 and S12 plays an important role in translational accuracy. Functionally, located at the back of the 30S subunit body where it stabilizes the conformation of the head with respect to the body. This is Small ribosomal subunit protein uS5 from Wolinella succinogenes (strain ATCC 29543 / DSM 1740 / CCUG 13145 / JCM 31913 / LMG 7466 / NCTC 11488 / FDC 602W) (Vibrio succinogenes).